A 1216-amino-acid chain; its full sequence is Histone-lysine N-methyltransferase SETDB1-B (1216 aa).

Residues 38 to 61 (KADLEQLQEWVEQREKEVADIDAL) adopt a coiled-coil conformation. Tudor domains lie at 266–329 (RLFV…LKKT) and 356–412 (LLKP…NLKM). The tract at residues 417 to 513 (SQEKKMAGQQ…QGMPSDLQPK (97 aa)) is disordered. Over residues 467 to 478 (PVAPQPAGPPQP) the composition is skewed to pro residues. The segment covering 482 to 498 (ESPSFKSQMAKKSTGQL) has biased composition (polar residues). Residues 595-666 (HRGRNPLLTP…EMFCLDPYVL (72 aa)) form the MBD domain. Residues 728-801 (VGCDCTDGCR…MCTNRLVQHG (74 aa)) form the Pre-SET domain. The Zn(2+) site is built by C730, C732, C736, C742, C744, C782, C786, C788, and C793. One can recognise an SET domain in the interval 804–1179 (VRLQLFKTQN…AGTELTWDYN (376 aa)). Residues 814–816 (KGW), D852, and Y854 contribute to the S-adenosyl-L-methionine site. Disordered regions lie at residues 892 to 944 (LPAS…DTFV), 961 to 1057 (RRQA…KTQA), and 1081 to 1108 (KSGG…NGPK). The segment covering 918–940 (DSSEESDDEKDDDSNEDDSDSSD) has biased composition (acidic residues). 2 stretches are compositionally biased toward basic and acidic residues: residues 966-976 (GLKEESQDSKD) and 983-997 (GEDR…ETGK). Residues 1003–1016 (WLTNQSSTSANQSV) show a composition bias toward polar residues. Composition is skewed to basic and acidic residues over residues 1020–1029 (GGIKTEKKDV) and 1046–1055 (DDNKEREKKT). Positions 1082 to 1105 (SGGGGAGGGGSGPSHGHGGGGGDN) are enriched in gly residues. Residues R1133 and 1136 to 1137 (NH) contribute to the S-adenosyl-L-methionine site. Zn(2+)-binding residues include C1139, C1192, C1194, and C1199. The Post-SET domain maps to 1188–1204 (KELLCCCGSTECRGRLL).

It belongs to the class V-like SAM-binding methyltransferase superfamily. Histone-lysine methyltransferase family. Suvar3-9 subfamily.

The protein localises to the nucleus. It localises to the chromosome. It carries out the reaction L-lysyl(4)-[histone H3] + 3 S-adenosyl-L-methionine = N(6),N(6),N(6)-trimethyl-L-lysyl(4)-[histone H3] + 3 S-adenosyl-L-homocysteine + 3 H(+). Its function is as follows. Histone methyltransferase that specifically trimethylates 'Lys-9' of histone H3. H3 'Lys-9' trimethylation represents a specific tag for epigenetic transcriptional repression by recruiting HP1 (CBX1, CBX3 and/or CBX5) proteins to methylated histones. Mainly functions in euchromatin regions, thereby playing a central role in the silencing of euchromatic genes. H3 'Lys-9' trimethylation is coordinated with DNA methylation. Plays a role in promoter hypermethylation and transcriptional silencing of tumor suppressor genes (TSGs) or other tumor-related genes. Also required to maintain a transcriptionally repressive state of genes in undifferentiated embryonic stem cells (ESCs). Associates at promoter regions of tumor suppressor genes (TSGs) leading to their gene silencing. This Danio rerio (Zebrafish) protein is Histone-lysine N-methyltransferase SETDB1-B (setdb1b).